The chain runs to 94 residues: Conotoxin Im026 (94 aa).

The first 24 residues, Met1 to Gly24, serve as a signal peptide directing secretion. A propeptide spanning residues Asp25–Arg59 is cleaved from the precursor.

Post-translationally, contains 4 disulfide bonds. In terms of tissue distribution, expressed by the venom duct.

It is found in the secreted. Its function is as follows. Probable neurotoxin. This chain is Conotoxin Im026, found in Conus imperialis (Imperial cone).